The chain runs to 157 residues: Dihydrofolate reductase type 6 (157 aa).

The DHFR domain occupies 2–156 (KISLMAAVSE…IDYTYQIWAK (155 aa)).

It belongs to the dihydrofolate reductase family. Homodimer.

The catalysed reaction is (6S)-5,6,7,8-tetrahydrofolate + NADP(+) = 7,8-dihydrofolate + NADPH + H(+). It participates in cofactor biosynthesis; tetrahydrofolate biosynthesis; 5,6,7,8-tetrahydrofolate from 7,8-dihydrofolate: step 1/1. Its function is as follows. Key enzyme in folate metabolism. Catalyzes an essential reaction for de novo glycine and purine synthesis, and for DNA precursor synthesis. This chain is Dihydrofolate reductase type 6 (dhfrVI), found in Proteus mirabilis.